A 2024-amino-acid chain; its full sequence is Pericentriolar material 1 protein (2024 aa).

Residues 1-92 form a disordered region; that stretch reads MATGGGPFED…FPHSRYMSQM (92 aa). Position 2 is an N-acetylalanine (alanine 2). The mediates interaction with DZIP1 stretch occupies residues 2–1460; the sequence is ATGGGPFEDG…TWIASNSELT (1459 aa). Residues 43–61 are compositionally biased toward basic and acidic residues; it reads RSSEKNKKKFGVESDKRVT. 7 positions are modified to phosphoserine: serine 65, serine 68, serine 69, serine 93, serine 110, serine 116, and serine 119. The segment at 111 to 163 is disordered; the sequence is DLDQRSIGSDSQGRATAANNKRQLSENRKPFNFLPMQINTNKSKDASTNPPNR. Composition is skewed to polar residues over residues 116 to 132 and 147 to 163; these read SIGS…NNKR and QINT…PPNR. Position 159 is a phosphoserine; in variant Ser-159 (asparagine 159). Residues 218–301 are a coiled coil; the sequence is KASSMREDLV…QLRALQGRQA (84 aa). The disordered stretch occupies residues 354-392; that stretch reads RDSQPPAVPDNRRQAESLSLTREVSQSRKPSASERLPDE. Over residues 369 to 383 the composition is skewed to polar residues; that stretch reads ESLSLTREVSQSRKP. A Phosphoserine modification is found at serine 370. Position 372 is a phosphoserine; by PLK4 (serine 372). Position 384 is a phosphoserine (serine 384). Lysine 399 carries the post-translational modification N6-acetyllysine. A coiled-coil region spans residues 400–424; that stretch reads MRVLQEKKQKMDKLLGELHTLRDQH. 2 disordered regions span residues 421 to 492 and 523 to 548; these read RDQH…KLQK and ENRK…VTNI. Polar residues-rich tracts occupy residues 425 to 445 and 456 to 477; these read LNNS…SAPS and GESN…SQNE. Residues 487–543 adopt a coiled-coil conformation; sequence SEKLQKLNEVRKRLNELRELVHYYEQTSDMMTDAVNENRKDEETEESEYDSEHENSE. The residue at position 588 (serine 588) is a Phosphoserine. 2 disordered regions span residues 614 to 652 and 699 to 726; these read HVAQ…HPED and FYPA…DTGV. Residues 618–632 show a composition bias toward acidic residues; it reads GEDDEEEEEEAEEEG. Residues 634 to 643 are compositionally biased toward low complexity; that stretch reads SGASLSSHRS. Position 643 is a phosphoserine (serine 643). Residues 651 to 682 adopt a coiled-coil conformation; it reads EDAEFEQKINRLMAAKQKLRQLQDLVAMVQDD. Over residues 708-719 the composition is skewed to polar residues; the sequence is QNSNNTRGNANK. Coiled-coil stretches lie at residues 726 to 769 and 824 to 858; these read VNEK…LQTA and SEMR…GLAE. Threonine 859 carries the phosphothreonine modification. Residues serine 861, serine 866, serine 869, and serine 872 each carry the phosphoserine modification. Position 877 is a phosphothreonine (threonine 877). Residues 915-947 are disordered; that stretch reads TDEEEEEEQDASSNDNFSVCPSNSVNHNSYNGK. Over residues 925–946 the composition is skewed to polar residues; the sequence is ASSNDNFSVCPSNSVNHNSYNG. Serine 960, serine 977, serine 988, and serine 991 each carry phosphoserine. Positions 1063–1089 form a coiled coil; the sequence is TQLTWQQNNVQRLKQMLNELMRQQNQH. 2 disordered regions span residues 1085-1109 and 1152-1211; these read QQNQ…PSPS and FSQN…RTPW. The segment covering 1089–1099 has biased composition (basic and acidic residues); that stretch reads HPEKPGGKERG. Over residues 1152 to 1173 the composition is skewed to polar residues; that stretch reads FSQNISTPSEQQQPLAQNSSGK. Phosphoserine occurs at positions 1185 and 1188. The segment covering 1192-1201 has biased composition (basic and acidic residues); that stretch reads EKPRNKKLPE. Phosphoserine occurs at positions 1229 and 1231. Positions 1232-1246 are enriched in polar residues; it reads VEKSTSSNRKNQLDT. A disordered region spans residues 1232–1342; the sequence is VEKSTSSNRK…RHSAQTEEPV (111 aa). Phosphoserine occurs at positions 1257, 1260, 1262, and 1263. The interaction with HAP1 stretch occupies residues 1279 to 1799; it reads TRKASAQASL…TQALTNYGSG (521 aa). The span at 1296-1313 shows a compositional bias: basic residues; that stretch reads KSKSKKRNSTQLKSRVKN. Phosphoserine occurs at positions 1318 and 1320. Phosphothreonine is present on threonine 1468. Residues 1515–1539 are a coiled coil; sequence IHLDQALARMREYERMKTEAESNSN. Phosphoserine occurs at positions 1573, 1697, 1730, 1765, 1768, 1776, and 1782. Disordered stretches follow at residues 1725–1868 and 1880–1944; these read LEDH…NNCP and EQPL…PVLV. Positions 1768–1777 are enriched in acidic residues; it reads SDQEEDEESE. Polar residues predominate over residues 1783–1797; sequence INLSKAETQALTNYG. The span at 1799-1815 shows a compositional bias: acidic residues; that stretch reads GEDENEDEEMEEFEEGP. Positions 1818 to 1827 are enriched in polar residues; sequence VQTSLQANTE. Positions 1835–1860 are enriched in basic and acidic residues; the sequence is DEQVLQRDFKKTAESKNVPLEREATS. The segment covering 1905 to 1916 has biased composition (low complexity); it reads PLRLPEMEPLVP. Residues 1913–2024 are interaction with BBS4; the sequence is PLVPRVKEVK…EPETVGAQSI (112 aa). Polar residues predominate over residues 1924 to 1933; the sequence is AQETPESSLA. Serine 1958 and serine 1977 each carry phosphoserine. The segment at 2005–2024 is disordered; it reads ELAGNSETLKEPETVGAQSI.

Belongs to the PCM1 family. In terms of assembly, self-associates. Interacts with C2CD3. Interacts with BBS4, BBS8, CETN3, HAP1, NDE1, NDEL1, MAP1LC3B, GABARAPAL2, and GABARAP. Interacts with CEP131; the interaction increases in response to ultraviolet light (UV) radiation. Associates with microtubule; association to microtubule is reduced in response to cellular stress, such as ultraviolet light (UV) radiation or heat shock, in a process that requires p38 MAP kinase signaling. Interacts with CFAP263. Interacts with SSX2IP. Interacts with CCDC13. Interacts with CEP290. Interacts with PARD6A. Interacts with KIAA0753/OFIP, CEP20/FOR20 and OFD1; the interaction with CEP20/FOR20 and OFD1 may be mediated by KIAA0753/OFIP. Interacts with CCDC66. Interacts with CCDC61. Interacts with DZIP1; localizes DZIP1 and the associated BBSome to centriolar satellite. Interacts with CSTPP1, TTLL1, TPGS1 and LRRC49. Interacts with CFAP53. In terms of processing, ubiquitinated. Undergoes monoubiquitination catalyzed by the E3 ubiquitin-protein ligase MIB1 in proliferating cells, preventing cilia formation. Monoubiquitination by MIB1 is inhibited in response to cellular stress, such as ultraviolet light (UV) radiation or heat shock, resulting in cilia formation initiation. Variant Ser-159 is phosphorylated. Post-translationally, phosphorylated on multiple serine and threonine residues by DYRK3 during the G2-to-M transition, after the nuclear-envelope breakdown. Phosphorylation by DYRK3 promotes disassembly of pericentriolar material. Phosphorylation at Ser-372 mediated by PLK4 is required to maintain the integrity of centriolar satellites. Expressed in blood, bone marrow, breast, lymph node, ovary and thyroid.

It localises to the cytoplasm. It is found in the cytoskeleton. Its subcellular location is the microtubule organizing center. The protein localises to the centrosome. The protein resides in the cytoplasmic granule. It localises to the centriolar satellite. It is found in the cilium basal body. Its function is as follows. Required for centrosome assembly and function. Essential for the correct localization of several centrosomal proteins including CEP250, CETN3, PCNT and NEK2. Required to anchor microtubules to the centrosome. Also involved in cilium biogenesis by recruiting the BBSome, a ciliary protein complex involved in cilium biogenesis, to the centriolar satellites. Recruits the tubulin polyglutamylase complex (TPGC) to centriolar satellites. The polypeptide is Pericentriolar material 1 protein (Homo sapiens (Human)).